The following is a 1505-amino-acid chain: Probable serine/threonine-protein kinase irlD (1505 aa).

A compositionally biased stretch (basic residues) spans 1–18 (MGPKKGKRSHSKNHHHHN). Disordered regions lie at residues 1-30 (MGPK…NSGG), 121-211 (IPQP…NNIL), 548-571 (TTTT…DKEN), and 862-1013 (EENE…TIAT). The segment covering 139-158 (SISTTTTTTTATAIEIESSS) has biased composition (low complexity). Positions 159 to 172 (GLTSNITDSTEIQL) are enriched in polar residues. Low complexity-rich tracts occupy residues 173–209 (DSTT…NSNN) and 548–561 (TTTT…TTTT). Basic and acidic residues-rich tracts occupy residues 562–571 (IDKDEKDKEN) and 862–882 (EENE…EKKK). Positions 846 to 892 (IRTEESLKAEKDLLEQEENEKKRLKEKRKKEEKEKKKQQNLKQKSLI) form a coiled coil. The span at 896–924 (TTTTTTTTPIPITVPIPTQTQTPTQTPTQ) shows a compositional bias: low complexity. Residues 925–943 (TPIPTPIPTTPIPTTPIPI) are compositionally biased toward pro residues. Low complexity-rich tracts occupy residues 944 to 954 (PIQLTPTTPKT) and 960 to 977 (TPKT…KTPK). Residues 978–989 (NSTLDKQTISTP) show a composition bias toward polar residues. The Protein kinase domain maps to 1054 to 1324 (RKDEFIIGRG…TENILLHPFF (271 aa)). ATP-binding positions include 1060 to 1068 (IGRGSNGTL) and Lys-1083. Asp-1194 acts as the Proton acceptor in catalysis. The 179-residue stretch at 1327–1505 (HEKKVKFIDA…LIYFNDLIIK (179 aa)) folds into the KEN domain.

This sequence belongs to the protein kinase superfamily. Ser/Thr protein kinase family.

It carries out the reaction L-seryl-[protein] + ATP = O-phospho-L-seryl-[protein] + ADP + H(+). It catalyses the reaction L-threonyl-[protein] + ATP = O-phospho-L-threonyl-[protein] + ADP + H(+). The protein is Probable serine/threonine-protein kinase irlD (irlD) of Dictyostelium discoideum (Social amoeba).